The chain runs to 207 residues: High frequency lysogenization protein HflD homolog (207 aa).

The protein belongs to the HflD family.

It is found in the cytoplasm. It localises to the cell inner membrane. In Methylococcus capsulatus (strain ATCC 33009 / NCIMB 11132 / Bath), this protein is High frequency lysogenization protein HflD homolog.